A 48-amino-acid polypeptide reads, in one-letter code: Osteocalcin (48 aa).

Residues 1–44 form the Gla domain; sequence AGTAPADLTVAQLESLKEVCEANLACEHMMDVSGIIAAYTAYYG. Ca(2+) is bound by residues Glu14, Glu18, Glu21, and Glu27. 4-carboxyglutamate occurs at positions 14, 18, and 21. Cysteines 20 and 26 form a disulfide.

The protein belongs to the osteocalcin/matrix Gla protein family. In terms of processing, gamma-carboxyglutamate residues are formed by vitamin K dependent carboxylation by GGCX. These residues are essential for the binding of calcium.

It is found in the secreted. The protein resides in the extracellular space. Its subcellular location is the extracellular matrix. Its function is as follows. The carboxylated form is one of the main organic components of the bone matrix, which constitutes 1-2% of the total bone protein. The carboxylated form binds strongly to apatite and calcium. The sequence is that of Osteocalcin (bglap) from Cyprinus carpio (Common carp).